A 232-amino-acid polypeptide reads, in one-letter code: Ion-translocating oxidoreductase complex subunit E (232 aa).

The next 6 helical transmembrane spans lie at 18-38, 39-59, 69-89, 93-113, 127-147, and 182-202; these read GLVQ…LTNA, IGLG…VSLV, IPVF…LINA, GLYL…VIIG, AAFD…LLGA, and NFLL…LIAI.

This sequence belongs to the NqrDE/RnfAE family. In terms of assembly, the complex is composed of six subunits: RnfA, RnfB, RnfC, RnfD, RnfE and RnfG.

Its subcellular location is the cell inner membrane. Its function is as follows. Part of a membrane-bound complex that couples electron transfer with translocation of ions across the membrane. In Shewanella loihica (strain ATCC BAA-1088 / PV-4), this protein is Ion-translocating oxidoreductase complex subunit E.